The chain runs to 262 residues: Glucosamine-6-phosphate deaminase (262 aa).

Residue D63 is the Proton acceptor; for enolization step of the active site. The For ring-opening step role is filled by N129. The active-site Proton acceptor; for ring-opening step is H131. E136 acts as the For ring-opening step in catalysis.

This sequence belongs to the glucosamine/galactosamine-6-phosphate isomerase family. NagB subfamily.

It catalyses the reaction alpha-D-glucosamine 6-phosphate + H2O = beta-D-fructose 6-phosphate + NH4(+). It participates in amino-sugar metabolism; N-acetylneuraminate degradation; D-fructose 6-phosphate from N-acetylneuraminate: step 5/5. In terms of biological role, catalyzes the reversible isomerization-deamination of glucosamine 6-phosphate (GlcN6P) to form fructose 6-phosphate (Fru6P) and ammonium ion. The sequence is that of Glucosamine-6-phosphate deaminase from Bacillus cytotoxicus (strain DSM 22905 / CIP 110041 / 391-98 / NVH 391-98).